The chain runs to 273 residues: DnaJ homolog subfamily C member 27 (273 aa).

The segment at 1-18 (MEANMPKRKEPGRSLRIK) is required for interaction with MAPK1. GTP is bound by residues 23–30 (GNAEVGKS), 71–75 (DMAGH), and 134–137 (NKID). In terms of domain architecture, J spans 217-273 (GSWDMLGVKPGASRDEVNKACRKLAVLLHPDKCVAPGSEDAFKAVVNARTALLKNIK).

The protein belongs to the small GTPase superfamily. Rab family. As to quaternary structure, interacts directly with MAPK1 (wild-type and kinase-deficient forms). Interacts directly (in GTP-bound form) with MAP2K1 (wild-type and kinase-deficient forms).

The protein localises to the nucleus. Functionally, GTPase which can activate the MEK/ERK pathway and induce cell transformation when overexpressed. May act as a nuclear scaffold for MAPK1, probably by association with MAPK1 nuclear export signal leading to enhanced ERK1/ERK2 signaling. The chain is DnaJ homolog subfamily C member 27 (DNAJC27) from Pongo abelii (Sumatran orangutan).